The following is a 407-amino-acid chain: Ribonuclease Z (407 aa).

The interval 1-308 (MEITFLGTSS…QDFLHYAIPR (308 aa)) is ribonuclease Z. The Zn(2+) site is built by H62, H64, D66, H67, H139, D210, and H268. Catalysis depends on D66, which acts as the Proton acceptor. The interval 309-407 (DGQICAEMPP…VDWSALNVLF (99 aa)) is unknown.

The protein belongs to the RNase Z family. In terms of assembly, homodimer. Zn(2+) is required as a cofactor.

The catalysed reaction is Endonucleolytic cleavage of RNA, removing extra 3' nucleotides from tRNA precursor, generating 3' termini of tRNAs. A 3'-hydroxy group is left at the tRNA terminus and a 5'-phosphoryl group is left at the trailer molecule.. Zinc phosphodiesterase, which displays some tRNA 3'-processing endonuclease activity. Probably involved in tRNA maturation, by removing a 3'-trailer from precursor tRNA. The chain is Ribonuclease Z (rnz) from Thermosynechococcus vestitus (strain NIES-2133 / IAM M-273 / BP-1).